The chain runs to 375 residues: Platelet-derived growth factor receptor-like protein (375 aa).

A signal peptide spans 1-21 (MKFWLLLGLLLLHEALEDVAG). Residues 20–63 (AGQHSPKNKRPKEQGENRIKPTNKKAKPKIPKVKDRDSTDSTAK) form a disordered region. A compositionally biased stretch (basic residues) spans 40–50 (PTNKKAKPKIP). In terms of domain architecture, Ig-like C2-type 1 spans 47 to 159 (PKIPKVKDRD…GYICRRDEAK (113 aa)). Cysteine 96 and cysteine 143 are oxidised to a cystine. An N-linked (GlcNAc...) asparagine glycan is attached at asparagine 219. Residues 272–375 (PSTTILASSN…TTVATTVEFS (104 aa)) enclose the Ig-like C2-type 2 domain. Residues cysteine 293 and cysteine 357 are joined by a disulfide bond.

Forms a complex composed of PDGFRL, TNK2 and GRB2.

It localises to the secreted. This Mus musculus (Mouse) protein is Platelet-derived growth factor receptor-like protein (Pdgfrl).